We begin with the raw amino-acid sequence, 617 residues long: Chaperone protein DnaK (617 aa).

Phosphothreonine; by autocatalysis is present on Thr174. The segment covering 575-592 (AQAQQQAQQQAQGQQGAQ) has biased composition (low complexity). Positions 575–617 (AQAQQQAQQQAQGQQGAQTDNQTGQNDGKTIDVDYEEVDDDDK) are disordered. A compositionally biased stretch (polar residues) spans 593–602 (TDNQTGQNDG). Positions 607–617 (VDYEEVDDDDK) are enriched in acidic residues.

This sequence belongs to the heat shock protein 70 family.

Functionally, acts as a chaperone. In Halothermothrix orenii (strain H 168 / OCM 544 / DSM 9562), this protein is Chaperone protein DnaK.